The chain runs to 59 residues: uncharacterized protein (59 aa).

This is an uncharacterized protein from Torque teno tupaia virus (isolate Tbc-TTV14).